Reading from the N-terminus, the 459-residue chain is Argininosuccinate lyase (459 aa).

It belongs to the lyase 1 family. Argininosuccinate lyase subfamily.

It is found in the cytoplasm. The enzyme catalyses 2-(N(omega)-L-arginino)succinate = fumarate + L-arginine. Its pathway is amino-acid biosynthesis; L-arginine biosynthesis; L-arginine from L-ornithine and carbamoyl phosphate: step 3/3. This Staphylococcus aureus (strain MRSA252) protein is Argininosuccinate lyase.